The primary structure comprises 1104 residues: Lon protease homolog, mitochondrial (1104 aa).

The transit peptide at 1–58 (MLPLRAFARLAQRPRLSRPTQLARSSLPRPSPSRPAAHYLALAPAPSTRFLHSSPPVL) directs the protein to the mitochondrion. The tract at residues 8 to 144 (ARLAQRPRLS…PGAGGPKEVA (137 aa)) is disordered. Low complexity predominate over residues 22-46 (LARSSLPRPSPSRPAAHYLALAPAP). Positions 80-103 (KQDDQVEKPLPDAESSKSAEERAK) are enriched in basic and acidic residues. Residues 104 to 128 (SQSSKPDIKASSSDSVSSSAPAPGS) show a composition bias toward low complexity. A compositionally biased stretch (gly residues) spans 129 to 139 (ADGGSPPGAGG). The Lon N-terminal domain occupies 155-444 (VLAIPITHRP…RALVLLKKEL (290 aa)). 597–604 (GPPGVGKT) contributes to the ATP binding site. The Lon proteolytic domain maps to 895-1082 (SPPAGVSTGL…RQVLHEAFRG (188 aa)). Residues serine 987 and lysine 1030 contribute to the active site.

Belongs to the peptidase S16 family. As to quaternary structure, homohexamer or homoheptamer. Organized in a ring with a central cavity.

It is found in the mitochondrion matrix. The catalysed reaction is Hydrolysis of proteins in presence of ATP.. Its function is as follows. ATP-dependent serine protease that mediates the selective degradation of misfolded, unassembled or oxidatively damaged polypeptides as well as certain short-lived regulatory proteins in the mitochondrial matrix. May also have a chaperone function in the assembly of inner membrane protein complexes. Participates in the regulation of mitochondrial gene expression and in the maintenance of the integrity of the mitochondrial genome. Binds to mitochondrial DNA in a site-specific manner. The chain is Lon protease homolog, mitochondrial from Cryptococcus neoformans var. neoformans serotype D (strain B-3501A) (Filobasidiella neoformans).